The chain runs to 299 residues: Homeobox protein ceh-24 (299 aa).

The span at 1 to 35 (MSEKETPSPVLDVKKEKNEETGIDEEKSSEDDCSK) shows a compositional bias: basic and acidic residues. 2 disordered regions span residues 1–45 (MSEK…NPSK) and 208–263 (QEKE…SGVF). Positions 150–209 (RRKRRVLFSQAQVYELERRFKQAKYLTAPEREQLANSIRLTPTQVKIWFQNHRYKCKRQE) form a DNA-binding region, homeobox. Over residues 242–252 (DDKDDEEEEES) the composition is skewed to acidic residues.

It belongs to the NK-2 homeobox family. As to expression, expressed in the 8 vulval muscles, 8-10 ventral neurons in the head and in the most posterior pharyngeal muscle cell, m8. Expressed in SIA, SIB and SMB sublateral motor neurons, and in muscles of the pharynx and vulva.

Its subcellular location is the nucleus. Functionally, probable transcriptional regulator that is required in neural development for the normal formation of sublateral cholinergic motor neuron processes. Plays a role in regulating the expression of acetylcholine transporter protein unc-17 in the sublateral processes. In particular, it is required in sublateral motor neurons for a left-right turning behavior that occurs during the lethargus phase of the normal sleep process called 'flipping'. During 'flipping' animals rotate 180 degrees about their longitudinal axis. This is Homeobox protein ceh-24 from Caenorhabditis elegans.